We begin with the raw amino-acid sequence, 160 residues long: Small ribosomal subunit protein bS6 (160 aa).

Residues 96–160 form a disordered region; that stretch reads RKVKRFIPRA…PRTRKVSKEQ (65 aa). Residues 126-145 show a composition bias toward low complexity; sequence TTDASKTEASTEATASKQSE. Residues 151–160 are compositionally biased toward basic residues; the sequence is PRTRKVSKEQ.

The protein belongs to the bacterial ribosomal protein bS6 family.

Binds together with bS18 to 16S ribosomal RNA. The protein is Small ribosomal subunit protein bS6 of Metamycoplasma arthritidis (strain 158L3-1) (Mycoplasma arthritidis).